The following is a 300-amino-acid chain: uncharacterized protein (300 aa).

Y53 serves as the catalytic Proton donor. Residue 210–220 (SPLAGGKVFTE) coordinates NADP(+).

The protein belongs to the aldo/keto reductase family. Aldo/keto reductase 2 subfamily.

This is an uncharacterized protein from Bacillus subtilis (strain 168).